Consider the following 1228-residue polypeptide: DNA-directed RNA polymerase subunit beta (1228 aa).

This sequence belongs to the RNA polymerase beta chain family. As to quaternary structure, the RNAP catalytic core consists of 2 alpha, 1 beta, 1 beta' and 1 omega subunit. When a sigma factor is associated with the core the holoenzyme is formed, which can initiate transcription.

The enzyme catalyses RNA(n) + a ribonucleoside 5'-triphosphate = RNA(n+1) + diphosphate. Functionally, DNA-dependent RNA polymerase catalyzes the transcription of DNA into RNA using the four ribonucleoside triphosphates as substrates. The chain is DNA-directed RNA polymerase subunit beta from Leptospira biflexa.